Here is a 165-residue protein sequence, read N- to C-terminus: Glutamyl-tRNA(Gln) amidotransferase subunit F, mitochondrial (165 aa).

The transit peptide at 1–19 (MKSILRSTTRNLITSSRRF) directs the protein to the mitochondrion.

This sequence belongs to the GatF family. In terms of assembly, subunit of the heterotrimeric GatFAB amidotransferase (AdT) complex, composed of A, B and F subunits.

It localises to the mitochondrion inner membrane. The enzyme catalyses L-glutamyl-tRNA(Gln) + L-glutamine + ATP + H2O = L-glutaminyl-tRNA(Gln) + L-glutamate + ADP + phosphate + H(+). Functionally, allows the formation of correctly charged Gln-tRNA(Gln) through the transamidation of misacylated Glu-tRNA(Gln) in the mitochondria. The reaction takes place in the presence of glutamine and ATP through an activated gamma-phospho-Glu-tRNA(Gln). Required for proper protein synthesis within the mitochondrion. The protein is Glutamyl-tRNA(Gln) amidotransferase subunit F, mitochondrial of Candida albicans (strain WO-1) (Yeast).